The primary structure comprises 188 residues: dCTP deaminase (188 aa).

DCTP is bound by residues 111-116 (KSTYAR), 135-137 (TLE), Q156, Y170, and Q180. E137 acts as the Proton donor/acceptor in catalysis.

Belongs to the dCTP deaminase family. As to quaternary structure, homotrimer.

The enzyme catalyses dCTP + H2O + H(+) = dUTP + NH4(+). It participates in pyrimidine metabolism; dUMP biosynthesis; dUMP from dCTP (dUTP route): step 1/2. In terms of biological role, catalyzes the deamination of dCTP to dUTP. The chain is dCTP deaminase from Aromatoleum aromaticum (strain DSM 19018 / LMG 30748 / EbN1) (Azoarcus sp. (strain EbN1)).